The primary structure comprises 163 residues: Nucleotide-binding protein AM1_1863 (163 aa).

The protein belongs to the YajQ family.

In terms of biological role, nucleotide-binding protein. The protein is Nucleotide-binding protein AM1_1863 of Acaryochloris marina (strain MBIC 11017).